Here is a 713-residue protein sequence, read N- to C-terminus: MTEELITPVYCTGVSAQVQKKRDKELGLGRHENAIKYLGQDYETLRARCLQSGVLFQDEAFPPVSHSLGFKELGPHSSKTYGIKWKRPTELMSNPQFIVDGATRTDICQGALGDCWLLAAIASLTLNETILHRVVPYGQSFQDGYAGIFHFQLWQFGEWVDVVIDDLLPTKDGKLVFVHSAQGNEFWSALLEKAYAKVNGSYEALSGGCTSEAFEDFTGGVTEWYDLQKAPSDLYQIILKALERGSLLGCSINISDIRDLEAITFKNLVRGHAYSVTGAKQVTYQGQRVNLIRMRNPWGEVEWKGPWSDSSYEWNKVDPYEREQLRVKMEDGEFWMSFRDFIREFTKLEICNLTPDALKSRTLRNWNTTFYEGTWRRGSTAGGCRNYPATFWVNPQFKIRLEEVDDADDYDNRESGCSFLLALMQKHRRRERRFGRDMETIGFAVYQVPRELAGQPVHLKRDFFLANASRAQSEHFINLREVSNRIRLPPGEYIVVPSTFEPNKEGDFLLRFFSEKKAGTQELDDQIQANLPDEKVLSEEEIDDNFKTLFSKLAGDDMEISVKELQTILNRIISKHKDLRTNGFSLESCRSMVNLMDRDGNGKLGLVEFNILWNRIRNYLTIFRKFDLDKSGSMSAYEMRMAIEAAGFKLNKKLHELIITRYSEPDLAVDFDNFVCCLVRLETMFRFFKLLDTDLDGVVTFDLFKWLQLTMFA.

One can recognise a Calpain catalytic domain in the interval 55 to 354 (LFQDEAFPPV…FTKLEICNLT (300 aa)). Positions 109 and 114 each coordinate Ca(2+). Active-site residues include C115, H272, and N296. D318 and E323 together coordinate Ca(2+). At T354 the chain carries Phosphothreonine. The tract at residues 355–525 (PDALKSRTLR…KKAGTQELDD (171 aa)) is domain III. The tract at residues 526 to 541 (QIQANLPDEKVLSEEE) is linker. 4 consecutive EF-hand domains span residues 540 to 575 (EEID…IISK), 584 to 617 (FSLE…NRIR), 614 to 649 (NRIR…AGFK), and 679 to 713 (VRLE…TMFA). The tract at residues 542-712 (IDDNFKTLFS…LFKWLQLTMF (171 aa)) is domain IV. Positions 597, 599, 601, 603, 608, 627, 629, 631, 633, and 638 each coordinate Ca(2+).

It belongs to the peptidase C2 family. In terms of assembly, forms a heterodimer with a small (regulatory) subunit CAPNS1. Requires Ca(2+) as cofactor. Post-translationally, undergoes calcium-induced successive autoproteolytic cleavages that generate a membrane-bound 78 kDa active form and an intracellular 75 kDa active form. Calpastatin reduces with high efficiency the transition from 78 kDa to 75 kDa calpain forms.

Its subcellular location is the cytoplasm. It is found in the cell membrane. The enzyme catalyses Broad endopeptidase specificity.. Activated by micromolar concentrations of calcium and inhibited by calpastatin. In terms of biological role, calcium-regulated non-lysosomal thiol-protease which catalyzes limited proteolysis of substrates involved in cytoskeletal remodeling and signal transduction. Proteolytically cleaves CTBP1 at 'Asn-375', 'Gly-388' and 'His-410'. Cleaves and activates caspase-7 (CASP7). This Mus musculus (Mouse) protein is Calpain-1 catalytic subunit.